The sequence spans 129 residues: Cytochrome c' (129 aa).

Heme c-binding residues include Arg-12, Gln-13, Thr-69, Glu-70, Cys-119, Cys-122, and His-123.

Binds 1 heme c group covalently per subunit.

Functionally, cytochrome c' is the most widely occurring bacterial c-type cytochrome. Cytochromes c' are high-spin proteins and the heme has no sixth ligand. Their exact function is not known. The chain is Cytochrome c' from Rubrivivax gelatinosus (Rhodocyclus gelatinosus).